A 337-amino-acid polypeptide reads, in one-letter code: D-alanine--D-alanine ligase (337 aa).

The ATP-grasp domain occupies 124–330; the sequence is KMWFSALGIP…FTEYLSLVIN (207 aa). 154 to 209 serves as a coordination point for ATP; sequence ALAQWGSIFVKAASQGSSVGCYKVDDSDKVAGVLKDAFGYAPYVIVEKTIKARELE. Mg(2+)-binding residues include D284, E297, and N299.

This sequence belongs to the D-alanine--D-alanine ligase family. Mg(2+) serves as cofactor. It depends on Mn(2+) as a cofactor.

Its subcellular location is the cytoplasm. It catalyses the reaction 2 D-alanine + ATP = D-alanyl-D-alanine + ADP + phosphate + H(+). Its pathway is cell wall biogenesis; peptidoglycan biosynthesis. Its function is as follows. Cell wall formation. The polypeptide is D-alanine--D-alanine ligase (Shewanella baltica (strain OS195)).